A 1051-amino-acid polypeptide reads, in one-letter code: Kinesin-like protein KIN-UC (1051 aa).

3 stretches are compositionally biased toward low complexity: residues 1-12 (MSSSNSSSAVRS), 28-39 (NSNHAVSLSSSS), and 64-90 (SASS…PVRR). Disordered stretches follow at residues 1-39 (MSSS…SSSS) and 51-109 (PGIA…RVSV). The Kinesin motor domain occupies 104–441 (RVRVSVRVRP…IMFGQRAMKI (338 aa)). 189-196 (GQTGTGKT) serves as a coordination point for ATP. The D-BOX motif lies at 411–419 (RTSLIITIG). Coiled-coil stretches lie at residues 452–534 (DYES…QKDQ) and 568–761 (DTSQ…KRYM). Residues 753-766 (NVVEEKRYMKEDLS) show a composition bias toward basic and acidic residues. Residues 753–788 (NVVEEKRYMKEDLSKGSAESGAQTGSQRSQGLKKSL) form a disordered region. Polar residues predominate over residues 772 to 788 (SGAQTGSQRSQGLKKSL). 3 ARM repeats span residues 792 to 831 (RATM…NLAA), 833 to 873 (EANQ…NLAM), and 875 to 915 (EKSQ…NLCG). The ARM 4; degenerate repeat unit spans residues 917–956 (EKFLKLLKEEEGIKGLLTMAQSGNIDIIAQVARGMANFAK).

This sequence belongs to the TRAFAC class myosin-kinesin ATPase superfamily. Kinesin family. Ungrouped subfamily. Interacts (via C-terminus) with NEK5. As to expression, expressed in young root hair-forming cells and in root hair-producing cells at the boundary between the hypocotyl and root. Expressed in cotyledons, young leaves, trichomes and flowers.

It localises to the cytoplasm. The protein resides in the cytoskeleton. The protein localises to the spindle. It is found in the phragmoplast. Acts as a plus-end microtubule-dependent motor protein. Involved in the control of root hair tip growth by promoting microtubule depolymerization and limiting the accumulation of endoplasmic microtubules. In vitro, binds to polymerized actin through ARM repeats, and to polymerized tubulin through N-terminal motor domain. This is Kinesin-like protein KIN-UC from Arabidopsis thaliana (Mouse-ear cress).